We begin with the raw amino-acid sequence, 664 residues long: MKRRNADCSKLRRPLKRNRITEGIYGSTFLYLKFLVVWALVLLADFVLEFRFEYLWPFWLFIRSVYDSFRYQGLAFSVFFVCVAFTSNIICLLFIPIQWLFFAASTYVWVQYVWHTERGVCLPTVSLWILFVYIEAAIRFKDLKNFHVDLCRPFAAHCIGYPVVTLGFGFKSYVSYKMRLRKQKEVQKENEFYMQLLQQALPPEQQMLQKQEKEAEEAAKGLPDMDSSILIHHNGGIPANKKLSTTLPEIEYREKGKEKDKDAKKHNLGINNNNILQPVDSKIQEIEYMENHINSKRLNNDLVGSTENLLKEDSCTASSKNYKNASGVVNSSPRSHSATNGSIPSSSSKNEKKQKCTSKSPSTHKDLMENCIPNNQLSKPDALVRLEQDIKKLKADLQASRQVEQELRSQISSLSSTERGIRSEMGQLRQENELLQNKLHNAVQMKQKDKQNISQLEKKLKAEQEARSFVEKQLMEEKKRKKLEEATAARAVAFAAASRGECTETLRNRIRELEAEGKKLTMDMKVKEDQIRELELKVQELRKYKENEKDTEVLMSALSAMQDKTQHLENSLSAETRIKLDLFSALGDAKRQLEIAQGQILQKDQEIKDLKQKIAEVMAVMPSITYSAATSPLSPVSPHYSSKFVETSPSGLDPNASVYQPLKK.

The next 4 membrane-spanning stretches (helical) occupy residues 28-48, 75-95, 120-140, and 154-174; these read TFLY…DFVL, AFSV…LLFI, VCLP…AIRF, and FAAH…KSYV. Residues 253–265 show a composition bias toward basic and acidic residues; sequence REKGKEKDKDAKK. Positions 253–274 are disordered; that stretch reads REKGKEKDKDAKKHNLGINNNN. Serine 305 carries the post-translational modification Phosphoserine. The span at 320–348 shows a compositional bias: polar residues; it reads KNYKNASGVVNSSPRSHSATNGSIPSSSS. The segment at 320–375 is disordered; sequence KNYKNASGVVNSSPRSHSATNGSIPSSSSKNEKKQKCTSKSPSTHKDLMENCIPNN. The N-linked (GlcNAc...) asparagine glycan is linked to asparagine 324. Serine 332 carries the post-translational modification Phosphoserine. Asparagine 340 and asparagine 452 each carry an N-linked (GlcNAc...) asparagine glycan. Residues 630-664 form a disordered region; that stretch reads TSPLSPVSPHYSSKFVETSPSGLDPNASVYQPLKK. Phosphoserine occurs at positions 631 and 634. An N-linked (GlcNAc...) asparagine glycan is attached at asparagine 655.

The protein belongs to the macoilin family.

The protein localises to the rough endoplasmic reticulum membrane. Its subcellular location is the nucleus membrane. Its function is as follows. Plays a role in the regulation of neuronal activity. This chain is Macoilin (MACO1), found in Canis lupus familiaris (Dog).